A 271-amino-acid chain; its full sequence is Probable iron transport system membrane protein HI_0359 (271 aa).

8 helical membrane-spanning segments follow: residues 17–37 (ALLT…YLVL), 55–75 (IVLA…SGIF), 93–113 (TAMG…FTKI), 131–151 (SHQE…LIVF), 168–188 (VAGL…ALTI), 194–214 (VVGV…ALTL), 221–241 (MLWV…ILSY), and 245–265 (ASTG…ALAY).

Belongs to the ABC-3 integral membrane protein family.

It localises to the cell inner membrane. In terms of biological role, part of an ATP-driven transport system HI_0359/HI_0360/HI_0361/HI_0362 for iron. This Haemophilus influenzae (strain ATCC 51907 / DSM 11121 / KW20 / Rd) protein is Probable iron transport system membrane protein HI_0359.